The chain runs to 257 residues: Non-homologous end joining protein Ku (257 aa).

Residues 9-184 form the Ku domain; sequence TFGMVAIPIG…YTKPEVNEQE (176 aa).

This sequence belongs to the prokaryotic Ku family. In terms of assembly, homodimer. Interacts with LigD.

Functionally, with LigD forms a non-homologous end joining (NHEJ) DNA repair enzyme, which repairs dsDNA breaks with reduced fidelity. Binds linear dsDNA with 5'- and 3'- overhangs but not closed circular dsDNA nor ssDNA. Recruits and stimulates the ligase activity of LigD. The sequence is that of Non-homologous end joining protein Ku from Lachnoclostridium phytofermentans (strain ATCC 700394 / DSM 18823 / ISDg) (Clostridium phytofermentans).